The sequence spans 302 residues: MEGFLCDRLLDAAQPIAERFRALFSLRNLRGDAPRRALLQAARDSSNLLAHEAAFALGQMQDAEAIPALEAVLKDLSLHPIVRHEAAEALGAIGLEKSISLLEESLAVDPAVEVQETCELAIRRIEEQKNTSGVESATVSPFLSVDPALPAKQGLPVEQLRELLLNEQESMYERYAALFALRNDSGDAAVSAIVAALGVKSALLRHEVAYVLGQLQNKAASDALSTVLKNVDEHPMVRHEAAEALGSIADQESIALLEEFAKDPEPIVSQSCEVALSMLEYERSGKAFEFLFPQTPQVQQES.

HEAT-like PBS-type repeat units follow at residues 49 to 75, 82 to 108, 171 to 200, 204 to 230, and 237 to 263; these read LAHE…VLKD, VRHE…SLAV, MYER…LGVK, LRHE…VLKN, and VRHE…FAKD. Fe cation is bound by residues His51, Glu52, His84, and Glu85. Fe cation-binding residues include His206, Glu207, His239, and Glu240.

It belongs to the deoxyhypusine hydroxylase family. Requires Fe(2+) as cofactor.

The enzyme catalyses [eIF5A protein]-deoxyhypusine + AH2 + O2 = [eIF5A protein]-hypusine + A + H2O. It participates in protein modification; eIF5A hypusination. In terms of biological role, catalyzes the hydroxylation of the N(6)-(4-aminobutyl)-L-lysine intermediate to form hypusine, an essential post-translational modification only found in mature eIF-5A factor. This is Deoxyhypusine hydroxylase-B from Oryza sativa subsp. japonica (Rice).